The following is a 205-amino-acid chain: Small ribosomal subunit protein uS4 (205 aa).

The segment covering 1-16 (MSKRESSKYKIDRRMG) has biased composition (basic and acidic residues). The segment at 1–46 (MSKRESSKYKIDRRMGENIWGRPKSPVNRREYGPGQHGQRRKGKLS) is disordered. Residues 94 to 157 (SRLDAIVYRA…KQLVIVLEAV (64 aa)) form the S4 RNA-binding domain.

Belongs to the universal ribosomal protein uS4 family. In terms of assembly, part of the 30S ribosomal subunit. Contacts protein S5. The interaction surface between S4 and S5 is involved in control of translational fidelity.

In terms of biological role, one of the primary rRNA binding proteins, it binds directly to 16S rRNA where it nucleates assembly of the body of the 30S subunit. Functionally, with S5 and S12 plays an important role in translational accuracy. The protein is Small ribosomal subunit protein uS4 of Rhizobium johnstonii (strain DSM 114642 / LMG 32736 / 3841) (Rhizobium leguminosarum bv. viciae).